We begin with the raw amino-acid sequence, 243 residues long: Pyridoxine 5'-phosphate synthase (243 aa).

Asn-9 is a binding site for 3-amino-2-oxopropyl phosphate. 1-deoxy-D-xylulose 5-phosphate is bound at residue Asp-11–His-12. Arg-20 is a 3-amino-2-oxopropyl phosphate binding site. His-45 serves as the catalytic Proton acceptor. 1-deoxy-D-xylulose 5-phosphate is bound by residues Arg-47 and His-52. The active-site Proton acceptor is Glu-72. Thr-102 is a 1-deoxy-D-xylulose 5-phosphate binding site. His-193 serves as the catalytic Proton donor. 3-amino-2-oxopropyl phosphate is bound by residues Gly-194 and Gly-215–His-216.

This sequence belongs to the PNP synthase family. Homooctamer; tetramer of dimers.

It localises to the cytoplasm. The catalysed reaction is 3-amino-2-oxopropyl phosphate + 1-deoxy-D-xylulose 5-phosphate = pyridoxine 5'-phosphate + phosphate + 2 H2O + H(+). The protein operates within cofactor biosynthesis; pyridoxine 5'-phosphate biosynthesis; pyridoxine 5'-phosphate from D-erythrose 4-phosphate: step 5/5. In terms of biological role, catalyzes the complicated ring closure reaction between the two acyclic compounds 1-deoxy-D-xylulose-5-phosphate (DXP) and 3-amino-2-oxopropyl phosphate (1-amino-acetone-3-phosphate or AAP) to form pyridoxine 5'-phosphate (PNP) and inorganic phosphate. The sequence is that of Pyridoxine 5'-phosphate synthase from Pseudoalteromonas translucida (strain TAC 125).